Reading from the N-terminus, the 403-residue chain is Para-nitrophenol 4-monooxygenase (403 aa).

FAD contacts are provided by residues 6 to 35 and 279 to 289; these read GVVV…VLEA and FRRGRVVLAGD.

Belongs to the PheA/TfdB FAD monooxygenase family. Monomer. The cofactor is FAD.

The enzyme catalyses 4-nitrophenol + NADPH + O2 + H(+) = 1,4-benzoquinone + nitrite + NADP(+) + H2O. The protein operates within xenobiotic degradation; 4-nitrophenol degradation. Involved in the degradation of para-nitrophenol (4-NP). Catalyzes oxidation of 4-nitrophenol (4-NP) at position 4 with concomitant removal of the nitro group as nitrite and production of para-benzoquinone. In Pseudomonas sp. (strain WBC-3), this protein is Para-nitrophenol 4-monooxygenase (pnpA).